Here is a 119-residue protein sequence, read N- to C-terminus: MKKVKEAEKRNIKRKKRIRDRIGFGVAERPRVTIFKSNKYFYAQVIDDIVGHTLASVSTIEKELSLNKNISDVKKLGEVLAKRLKDKNISKLIFDRNGYKYHGLIAGFATALREAGIDV.

The protein belongs to the universal ribosomal protein uL18 family. In terms of assembly, part of the 50S ribosomal subunit; part of the 5S rRNA/L5/L18/L25 subcomplex. Contacts the 5S and 23S rRNAs.

This is one of the proteins that bind and probably mediate the attachment of the 5S RNA into the large ribosomal subunit, where it forms part of the central protuberance. This is Large ribosomal subunit protein uL18 from Borrelia duttonii (strain Ly).